Consider the following 644-residue polypeptide: DNA mismatch repair protein MutL (644 aa).

The interval 336–356 (KRNINPLNRDDKTKDKSEYQK) is disordered. The segment covering 343 to 356 (NRDDKTKDKSEYQK) has biased composition (basic and acidic residues).

It belongs to the DNA mismatch repair MutL/HexB family.

This protein is involved in the repair of mismatches in DNA. It is required for dam-dependent methyl-directed DNA mismatch repair. May act as a 'molecular matchmaker', a protein that promotes the formation of a stable complex between two or more DNA-binding proteins in an ATP-dependent manner without itself being part of a final effector complex. The protein is DNA mismatch repair protein MutL of Halothermothrix orenii (strain H 168 / OCM 544 / DSM 9562).